A 289-amino-acid chain; its full sequence is Ribonuclease Z (289 aa).

7 residues coordinate Zn(2+): histidine 63, histidine 65, aspartate 67, histidine 68, histidine 143, aspartate 197, and histidine 255. Aspartate 67 acts as the Proton acceptor in catalysis.

Belongs to the RNase Z family. In terms of assembly, homodimer. The cofactor is Zn(2+).

The catalysed reaction is Endonucleolytic cleavage of RNA, removing extra 3' nucleotides from tRNA precursor, generating 3' termini of tRNAs. A 3'-hydroxy group is left at the tRNA terminus and a 5'-phosphoryl group is left at the trailer molecule.. In terms of biological role, zinc phosphodiesterase, which displays some tRNA 3'-processing endonuclease activity. Probably involved in tRNA maturation, by removing a 3'-trailer from precursor tRNA. In Azobacteroides pseudotrichonymphae genomovar. CFP2, this protein is Ribonuclease Z.